We begin with the raw amino-acid sequence, 151 residues long: Deoxyuridine 5'-triphosphate nucleotidohydrolase (151 aa).

Substrate-binding positions include 70 to 72 (RSG), Asn-83, 87 to 89 (LID), and Met-97.

Belongs to the dUTPase family. Requires Mg(2+) as cofactor.

It carries out the reaction dUTP + H2O = dUMP + diphosphate + H(+). The protein operates within pyrimidine metabolism; dUMP biosynthesis; dUMP from dCTP (dUTP route): step 2/2. In terms of biological role, this enzyme is involved in nucleotide metabolism: it produces dUMP, the immediate precursor of thymidine nucleotides and it decreases the intracellular concentration of dUTP so that uracil cannot be incorporated into DNA. The polypeptide is Deoxyuridine 5'-triphosphate nucleotidohydrolase (Yersinia enterocolitica serotype O:8 / biotype 1B (strain NCTC 13174 / 8081)).